Consider the following 209-residue polypeptide: Endonuclease III (209 aa).

The 20-residue stretch at 108 to 127 (RTELESLPGVGRKTANIILN) folds into the HhH domain. Positions 187, 194, 197, and 203 each coordinate [4Fe-4S] cluster.

It belongs to the Nth/MutY family. [4Fe-4S] cluster serves as cofactor.

It carries out the reaction 2'-deoxyribonucleotide-(2'-deoxyribose 5'-phosphate)-2'-deoxyribonucleotide-DNA = a 3'-end 2'-deoxyribonucleotide-(2,3-dehydro-2,3-deoxyribose 5'-phosphate)-DNA + a 5'-end 5'-phospho-2'-deoxyribonucleoside-DNA + H(+). In terms of biological role, DNA repair enzyme that has both DNA N-glycosylase activity and AP-lyase activity. The DNA N-glycosylase activity releases various damaged pyrimidines from DNA by cleaving the N-glycosidic bond, leaving an AP (apurinic/apyrimidinic) site. The AP-lyase activity cleaves the phosphodiester bond 3' to the AP site by a beta-elimination, leaving a 3'-terminal unsaturated sugar and a product with a terminal 5'-phosphate. This is Endonuclease III from Buchnera aphidicola subsp. Schizaphis graminum (strain Sg).